Consider the following 324-residue polypeptide: MLEQGLLVTAGVAFLISVALSPLFIPFLRKLKFGQSIRDEGPKSHQKKSGTPTMGGIVIYVSMMVTTLIMAIKFNNLGAEVSLLLLVTFGYGLIGFLDDYIKVVKKRNLGLTSKQKLIGQLVIAIAFFLIGKGQAFHTYIMIPGTDVKFELGWAYFVLVLFMLIGGSNAVNLTDGLDGLLSGTAAIAFGAFSIIAVAQEQFGVAIFCMAVVGAVLGFLVFNANPAKVFMGDTGSLALGGAIAAVAILLKQELLLVIIGGVFVAETLSVIIQVISFKTTGKRVFKMSPLHHHYELCGWSEWRVVVTFWSVGFLLAVLGIYIGVWM.

A run of 10 helical transmembrane segments spans residues 5 to 25 (GLLV…PLFI), 52 to 72 (PTMG…IMAI), 77 to 97 (LGAE…IGFL), 122 to 142 (VIAI…YIMI), 149 to 169 (FELG…GSNA), 176 to 196 (LDGL…IIAV), 201 to 221 (FGVA…LVFN), 227 to 247 (VFMG…VAIL), 253 to 273 (LLVI…IQVI), and 302 to 322 (VVVT…YIGV).

Belongs to the glycosyltransferase 4 family. MraY subfamily. Requires Mg(2+) as cofactor.

The protein resides in the cell membrane. It carries out the reaction UDP-N-acetyl-alpha-D-muramoyl-L-alanyl-gamma-D-glutamyl-meso-2,6-diaminopimeloyl-D-alanyl-D-alanine + di-trans,octa-cis-undecaprenyl phosphate = di-trans,octa-cis-undecaprenyl diphospho-N-acetyl-alpha-D-muramoyl-L-alanyl-D-glutamyl-meso-2,6-diaminopimeloyl-D-alanyl-D-alanine + UMP. The protein operates within cell wall biogenesis; peptidoglycan biosynthesis. In terms of biological role, catalyzes the initial step of the lipid cycle reactions in the biosynthesis of the cell wall peptidoglycan: transfers peptidoglycan precursor phospho-MurNAc-pentapeptide from UDP-MurNAc-pentapeptide onto the lipid carrier undecaprenyl phosphate, yielding undecaprenyl-pyrophosphoryl-MurNAc-pentapeptide, known as lipid I. The chain is Phospho-N-acetylmuramoyl-pentapeptide-transferase from Bacillus mycoides (strain KBAB4) (Bacillus weihenstephanensis).